The sequence spans 142 residues: Hemoglobin subunit alpha (142 aa).

The 141-residue stretch at 2-142 (VLSAADKTNV…VSTVLTSKYR (141 aa)) folds into the Globin domain. S4 bears the Phosphoserine mark. K8 bears the N6-succinyllysine mark. Phosphothreonine is present on T9. K12 bears the N6-succinyllysine mark. N6-acetyllysine; alternate is present on K17. An N6-succinyllysine; alternate modification is found at K17. Y25 is modified (phosphotyrosine). K41 bears the N6-succinyllysine mark. Residue S50 is modified to Phosphoserine. H59 provides a ligand contact to O2. H88 contributes to the heme b binding site. S103 carries the post-translational modification Phosphoserine. T109 is modified (phosphothreonine). A phosphoserine mark is found at S125 and S132. T135 and T138 each carry phosphothreonine. S139 carries the post-translational modification Phosphoserine.

This sequence belongs to the globin family. As to quaternary structure, heterotetramer of two alpha chains and two beta chains. In terms of tissue distribution, red blood cells.

Involved in oxygen transport from the lung to the various peripheral tissues. Its function is as follows. Hemopressin acts as an antagonist peptide of the cannabinoid receptor CNR1. Hemopressin-binding efficiently blocks cannabinoid receptor CNR1 and subsequent signaling. The protein is Hemoglobin subunit alpha (HBA) of Equus caballus (Horse).